Consider the following 474-residue polypeptide: Siroheme synthase (474 aa).

The interval 1-203 (MDYLPIFLKL…GRAEDAERVL (203 aa)) is precorrin-2 dehydrogenase /sirohydrochlorin ferrochelatase. NAD(+)-binding positions include 22 to 23 (EV) and 43 to 44 (AS). The uroporphyrinogen-III C-methyltransferase stretch occupies residues 219-474 (GSVALVGAGP…QETEGRSGNG (256 aa)). Proline 228 lines the S-adenosyl-L-methionine pocket. The Proton acceptor role is filled by aspartate 251. The Proton donor role is filled by lysine 273. S-adenosyl-L-methionine is bound by residues 304 to 306 (GGD), isoleucine 309, 334 to 335 (TA), methionine 387, and glycine 416.

In the N-terminal section; belongs to the precorrin-2 dehydrogenase / sirohydrochlorin ferrochelatase family. This sequence in the C-terminal section; belongs to the precorrin methyltransferase family.

The catalysed reaction is uroporphyrinogen III + 2 S-adenosyl-L-methionine = precorrin-2 + 2 S-adenosyl-L-homocysteine + H(+). It carries out the reaction precorrin-2 + NAD(+) = sirohydrochlorin + NADH + 2 H(+). It catalyses the reaction siroheme + 2 H(+) = sirohydrochlorin + Fe(2+). It functions in the pathway cofactor biosynthesis; adenosylcobalamin biosynthesis; precorrin-2 from uroporphyrinogen III: step 1/1. The protein operates within cofactor biosynthesis; adenosylcobalamin biosynthesis; sirohydrochlorin from precorrin-2: step 1/1. Its pathway is porphyrin-containing compound metabolism; siroheme biosynthesis; precorrin-2 from uroporphyrinogen III: step 1/1. It participates in porphyrin-containing compound metabolism; siroheme biosynthesis; siroheme from sirohydrochlorin: step 1/1. It functions in the pathway porphyrin-containing compound metabolism; siroheme biosynthesis; sirohydrochlorin from precorrin-2: step 1/1. Its function is as follows. Multifunctional enzyme that catalyzes the SAM-dependent methylations of uroporphyrinogen III at position C-2 and C-7 to form precorrin-2 via precorrin-1. Then it catalyzes the NAD-dependent ring dehydrogenation of precorrin-2 to yield sirohydrochlorin. Finally, it catalyzes the ferrochelation of sirohydrochlorin to yield siroheme. The sequence is that of Siroheme synthase from Methylococcus capsulatus (strain ATCC 33009 / NCIMB 11132 / Bath).